A 282-amino-acid polypeptide reads, in one-letter code: Pantothenate synthetase (282 aa).

30-37 (MGYLHEGH) contributes to the ATP binding site. Catalysis depends on histidine 37, which acts as the Proton donor. Residue glutamine 61 participates in (R)-pantoate binding. Glutamine 61 is a binding site for beta-alanine. Residue 147–150 (GMKD) participates in ATP binding. Glutamine 153 serves as a coordination point for (R)-pantoate. ATP contacts are provided by residues valine 176 and 184 to 187 (KSSR).

It belongs to the pantothenate synthetase family. As to quaternary structure, homodimer.

The protein localises to the cytoplasm. The catalysed reaction is (R)-pantoate + beta-alanine + ATP = (R)-pantothenate + AMP + diphosphate + H(+). It participates in cofactor biosynthesis; (R)-pantothenate biosynthesis; (R)-pantothenate from (R)-pantoate and beta-alanine: step 1/1. In terms of biological role, catalyzes the condensation of pantoate with beta-alanine in an ATP-dependent reaction via a pantoyl-adenylate intermediate. This chain is Pantothenate synthetase, found in Bacillus cereus (strain ATCC 14579 / DSM 31 / CCUG 7414 / JCM 2152 / NBRC 15305 / NCIMB 9373 / NCTC 2599 / NRRL B-3711).